The sequence spans 68 residues: Alpha-conotoxin-like Ca1.2 (68 aa).

The N-terminal stretch at 1 to 21 is a signal peptide; sequence MGMRMMFTVFLLVVLATTVVS. Positions 22-48 are excised as a propeptide; it reads FTSDRASEGRNAAAKDKASDLVALTVR. Cystine bridges form between Cys-50-Cys-56 and Cys-51-Cys-64. A lacks the Ser-Xaa-Pro motif that is crucial for potent interaction with nAChR region spans residues 52-54; that stretch reads AIR. Tyr-63 bears the Sulfotyrosine mark. Cys-64 is modified (cysteine amide). A propeptide spanning residues 65 to 68 is cleaved from the precursor; sequence GGIY.

Belongs to the conotoxin A superfamily. Expressed by the venom duct.

The protein resides in the secreted. Functionally, alpha-conotoxins act on postsynaptic membranes, they bind to the nicotinic acetylcholine receptors (nAChR) and thus inhibit them. Has possibly a distinct nAChR binding mode from other alpha-conotoxins, due to a different three residue motif (lacks the Ser-Xaa-Pro motif). This is Alpha-conotoxin-like Ca1.2 from Conus caracteristicus (Characteristic cone).